Here is a 286-residue protein sequence, read N- to C-terminus: ATP phosphoribosyltransferase (286 aa).

This sequence belongs to the ATP phosphoribosyltransferase family. Long subfamily. Requires Mg(2+) as cofactor.

Its subcellular location is the cytoplasm. It catalyses the reaction 1-(5-phospho-beta-D-ribosyl)-ATP + diphosphate = 5-phospho-alpha-D-ribose 1-diphosphate + ATP. It participates in amino-acid biosynthesis; L-histidine biosynthesis; L-histidine from 5-phospho-alpha-D-ribose 1-diphosphate: step 1/9. Feedback inhibited by histidine. Its function is as follows. Catalyzes the condensation of ATP and 5-phosphoribose 1-diphosphate to form N'-(5'-phosphoribosyl)-ATP (PR-ATP). Has a crucial role in the pathway because the rate of histidine biosynthesis seems to be controlled primarily by regulation of HisG enzymatic activity. This is ATP phosphoribosyltransferase from Paenarthrobacter aurescens (strain TC1).